A 144-amino-acid polypeptide reads, in one-letter code: Large ribosomal subunit protein uL16 (144 aa).

This sequence belongs to the universal ribosomal protein uL16 family. As to quaternary structure, part of the 50S ribosomal subunit.

Its function is as follows. Binds 23S rRNA and is also seen to make contacts with the A and possibly P site tRNAs. This Bacillus mycoides (strain KBAB4) (Bacillus weihenstephanensis) protein is Large ribosomal subunit protein uL16.